Consider the following 427-residue polypeptide: Glutamate-1-semialdehyde 2,1-aminomutase (427 aa).

Lysine 265 carries the N6-(pyridoxal phosphate)lysine modification.

The protein belongs to the class-III pyridoxal-phosphate-dependent aminotransferase family. HemL subfamily. As to quaternary structure, homodimer. Requires pyridoxal 5'-phosphate as cofactor.

It localises to the cytoplasm. The catalysed reaction is (S)-4-amino-5-oxopentanoate = 5-aminolevulinate. It functions in the pathway porphyrin-containing compound metabolism; protoporphyrin-IX biosynthesis; 5-aminolevulinate from L-glutamyl-tRNA(Glu): step 2/2. In Neisseria meningitidis serogroup C (strain 053442), this protein is Glutamate-1-semialdehyde 2,1-aminomutase.